A 124-amino-acid polypeptide reads, in one-letter code: MSQKWGLVHIYASYNNTILHVTDLTGAETIAKVSGGMIVRNQRDESSPYAAMQAAFKIADLMRDKGIDQVHVKVRATGGQKSKNPGPGAQAAIRALSRAGIRIGRIEDATPIPHDGTTPKRKNR.

The tract at residues arginine 102–arginine 124 is disordered.

It belongs to the universal ribosomal protein uS11 family. In terms of assembly, part of the 30S ribosomal subunit.

Located on the platform of the 30S subunit. The protein is Small ribosomal subunit protein uS11 of Methanococcus maripaludis (strain C5 / ATCC BAA-1333).